Consider the following 966-residue polypeptide: Translation initiation factor IF-2 (966 aa).

5 stretches are compositionally biased toward basic and acidic residues: residues 99 to 113 (KRDEAGADQHNEAAD), 123 to 183 (EQAR…KAEE), 197 to 212 (DASRKKAEDEQARVAV), 220 to 249 (AADDAKAAADKARAEQDAARKRREAAEAEA), and 266 to 277 (PSERKAEEKKAE). The segment at 99–382 (KRDEAGADQH…NFQAPTEPVV (284 aa)) is disordered. A compositionally biased stretch (low complexity) spans 304–315 (AATTTTTTATTT). A compositionally biased stretch (gly residues) spans 346–359 (SSGGVGGWRGGPRG). The 170-residue stretch at 466–635 (PRPPVVTVMG…LLQAEVLELK (170 aa)) folds into the tr-type G domain. The G1 stretch occupies residues 475 to 482 (GHVDHGKT). 475-482 (GHVDHGKT) is a binding site for GTP. The tract at residues 500-504 (GITQH) is G2. The G3 stretch occupies residues 521-524 (DTPG). GTP-binding positions include 521 to 525 (DTPGH) and 575 to 578 (NKID). The segment at 575-578 (NKID) is G4. The tract at residues 611 to 613 (SAK) is G5.

This sequence belongs to the TRAFAC class translation factor GTPase superfamily. Classic translation factor GTPase family. IF-2 subfamily.

Its subcellular location is the cytoplasm. Functionally, one of the essential components for the initiation of protein synthesis. Protects formylmethionyl-tRNA from spontaneous hydrolysis and promotes its binding to the 30S ribosomal subunits. Also involved in the hydrolysis of GTP during the formation of the 70S ribosomal complex. In Cupriavidus pinatubonensis (strain JMP 134 / LMG 1197) (Cupriavidus necator (strain JMP 134)), this protein is Translation initiation factor IF-2.